The following is a 193-amino-acid chain: Ribosomal RNA small subunit methyltransferase G (193 aa).

S-adenosyl-L-methionine contacts are provided by residues Gly-61, Leu-66, 112–113 (IE), and Arg-126.

It belongs to the methyltransferase superfamily. RNA methyltransferase RsmG family.

Its subcellular location is the cytoplasm. The catalysed reaction is guanosine(527) in 16S rRNA + S-adenosyl-L-methionine = N(7)-methylguanosine(527) in 16S rRNA + S-adenosyl-L-homocysteine. Functionally, specifically methylates the N7 position of guanine in position 527 of 16S rRNA. This is Ribosomal RNA small subunit methyltransferase G from Paracoccus denitrificans (strain Pd 1222).